Reading from the N-terminus, the 446-residue chain is tRNA modification GTPase MnmE (446 aa).

Residues arginine 24, glutamate 81, and lysine 120 each contribute to the (6S)-5-formyl-5,6,7,8-tetrahydrofolate site. The TrmE-type G domain maps to glycine 216–leucine 368. Residue asparagine 226 participates in K(+) binding. GTP-binding positions include asparagine 226–serine 231, threonine 245–threonine 251, and aspartate 270–glycine 273. Mg(2+) is bound at residue serine 230. Residues threonine 245, valine 247, and threonine 250 each coordinate K(+). Residue threonine 251 coordinates Mg(2+). A (6S)-5-formyl-5,6,7,8-tetrahydrofolate-binding site is contributed by lysine 446.

This sequence belongs to the TRAFAC class TrmE-Era-EngA-EngB-Septin-like GTPase superfamily. TrmE GTPase family. As to quaternary structure, homodimer. Heterotetramer of two MnmE and two MnmG subunits. K(+) serves as cofactor.

It is found in the cytoplasm. Exhibits a very high intrinsic GTPase hydrolysis rate. Involved in the addition of a carboxymethylaminomethyl (cmnm) group at the wobble position (U34) of certain tRNAs, forming tRNA-cmnm(5)s(2)U34. This Xanthomonas oryzae pv. oryzae (strain MAFF 311018) protein is tRNA modification GTPase MnmE.